A 137-amino-acid chain; its full sequence is Large ribosomal subunit protein uL16 (137 aa).

It belongs to the universal ribosomal protein uL16 family. In terms of assembly, part of the 50S ribosomal subunit.

In terms of biological role, binds 23S rRNA and is also seen to make contacts with the A and possibly P site tRNAs. In Rhodopseudomonas palustris (strain BisB18), this protein is Large ribosomal subunit protein uL16.